Reading from the N-terminus, the 255-residue chain is METVQSAHEYIEHHLTFLTAGDGWFGINLDSMIMVWLTGLVFILSFRYAVTKGTKGVPGRFQCLIEIIFEFVDDIVKEIFQAKDKLIGPLALTIFVWVLLMNAVDLLPIDLIPALTSAVGVEHFRDLPSADINITMSMALGVFILVLGYTFKNKGVKGFIKELTTQPFSHPLLYPVNLVLELVTLISKPISLGLRLFGNMYAGEMIFILIALMPWWMQWALSVPWALFHILIVVLQAFIFMVLTVVYLGMAVEEH.

5 consecutive transmembrane segments (helical) span residues 24-44 (WFGI…VFIL), 86-106 (LIGP…AVDL), 131-151 (DINI…GYTF), 205-225 (MIFI…SVPW), and 226-246 (ALFH…LTVV).

Belongs to the ATPase A chain family. F-type ATPases have 2 components, CF(1) - the catalytic core - and CF(0) - the membrane proton channel. CF(1) has five subunits: alpha(3), beta(3), gamma(1), delta(1), epsilon(1). CF(0) has three main subunits: a(1), b(2) and c(9-12). The alpha and beta chains form an alternating ring which encloses part of the gamma chain. CF(1) is attached to CF(0) by a central stalk formed by the gamma and epsilon chains, while a peripheral stalk is formed by the delta and b chains.

The protein resides in the cell inner membrane. Key component of the proton channel; it plays a direct role in the translocation of protons across the membrane. This Vibrio campbellii (strain ATCC BAA-1116) protein is ATP synthase subunit a 2.